Here is a 107-residue protein sequence, read N- to C-terminus: Heme-degrading monooxygenase (107 aa).

Residues 2–94 (IIVTNTTKIT…YILDNKIAYY (93 aa)) form the ABM domain. Asn-6 serves as a coordination point for Fe cation. Heme is bound at residue His-76.

This sequence belongs to the antibiotic biosynthesis monooxygenase family. Heme-degrading monooxygenase IsdG subfamily. In terms of assembly, homodimer.

It localises to the cytoplasm. It carries out the reaction heme b + 3 reduced [NADPH--hemoprotein reductase] + 3 O2 = biliverdin IXalpha + CO + Fe(2+) + 3 oxidized [NADPH--hemoprotein reductase] + 3 H2O + H(+). Its function is as follows. Allows bacterial pathogens to use the host heme as an iron source. Catalyzes the oxidative degradation of the heme macrocyclic porphyrin ring to the biliverdin in the presence of a suitable electron donor such as ascorbate or NADPH--cytochrome P450 reductase, with subsequent release of free iron. This is Heme-degrading monooxygenase from Bacillus mycoides (strain KBAB4) (Bacillus weihenstephanensis).